The following is a 477-amino-acid chain: Salivary plasminogen activator alpha 2 (477 aa).

A signal peptide spans 1–36 (MVNTMKTKLLCVLLLCGAVFSLPRQETYRQLARGSR). Residues 40 to 82 (VACRDEKTQMIYQQQESWLRPEVRSKRVEHCRCDRGLAQCHTV) enclose the Fibronectin type-I domain. Disulfide bonds link cysteine 42/cysteine 72, cysteine 70/cysteine 79, cysteine 87/cysteine 98, cysteine 92/cysteine 109, cysteine 111/cysteine 120, cysteine 128/cysteine 209, cysteine 149/cysteine 191, cysteine 180/cysteine 204, cysteine 214/cysteine 345, cysteine 257/cysteine 273, cysteine 265/cysteine 334, cysteine 359/cysteine 434, cysteine 391/cysteine 407, and cysteine 424/cysteine 452. One can recognise an EGF-like domain in the interval 83–121 (PVKSCSELRCFNGGTCWQAASFSDFVCQCPKGYTGKQCE). The region spanning 128–209 (CYKDQGVTYR…ILEFCSVPVC (82 aa)) is the Kringle domain. N-linked (GlcNAc...) asparagine glycosylation occurs at asparagine 185. The region spanning 226 to 476 (STGGLFTDIT…YLGWIRDNMR (251 aa)) is the Peptidase S1 domain. Active-site charge relay system residues include histidine 272 and aspartate 321. Asparagine 398 is a glycosylation site (N-linked (GlcNAc...) asparagine). Serine 428 serves as the catalytic Charge relay system.

This sequence belongs to the peptidase S1 family. In terms of assembly, monomer.

The protein localises to the secreted. It carries out the reaction Specific cleavage of Arg-|-Val bond in plasminogen to form plasmin.. Its activity is regulated as follows. Activity toward plasminogen is stimulated in the presence of fibrin I. In terms of biological role, probably essential to support the feeding habits of this exclusively haematophagous animal. Probable potent thrombolytic agent. This Desmodus rotundus (Vampire bat) protein is Salivary plasminogen activator alpha 2.